Here is a 287-residue protein sequence, read N- to C-terminus: Toxin zeta (287 aa).

40–47 is a binding site for ATP; it reads GQPGSGKT. Residues 250–287 are disordered; the sequence is MVQNQHQETPEFKAIQQKMESLQPPTPPIPKTPKLPGI. Over residues 273 to 287 the composition is skewed to pro residues; sequence PPTPPIPKTPKLPGI.

This sequence belongs to the zeta toxin family. In the presence of the epsilon antitoxin, forms an inactive PezA(2)PezT(2) heterotetramer.

It catalyses the reaction UDP-N-acetyl-alpha-D-glucosamine + ATP = UDP-N-acetyl-alpha-D-glucosamine 3'-phosphate + ADP + H(+). Toxic component of a type II toxin-antitoxin (TA) system. Phosphorylates UDP-N-acetyl-D-glucosamine (UNAG) on the 3'-hydroxyl group of the N-acetyl-D-glucosamine moiety, yielding UNAG-3P. UNAG-3P inhibits MurA, the first committed step in cell wall synthesis, which is then blocked. Phosphorylation is inhibited by cognate epsilon antitoxin. Part of a postsegregational killing (PSK) system involved in the killing of plasmid-free cells. The zeta toxin induces programmed cell death. This chain is Toxin zeta, found in Streptococcus agalactiae.